We begin with the raw amino-acid sequence, 708 residues long: MAESGSTNPKSPSVVPDSTLGGLKRDLRNYHDGDDSNNLSIKKSKTTKMENNCREIVPLDVTPLSIVPPDTPKLSRQFWKAGDDDEAAPVPLYCSNDAAVRVHPQFLHANATSHKWALGALAELLDNSLDEVSNGATYVHVDSTINKRDGKSSILIVEDNGGGMNPSTFRECLSLGYSRKRNMANRVGQYGNGFKTSTMRLGADAIVFSRSRGINGNNPTQSIGMLSYTFLYETRKCEAIVPTVDYELVDNKWKEIVYNSTNEWLDNLETILRWSPYLSQQDLLDQFNHLEEQGTRIVIYNLWEDDEGKMELDFDTDPHDIQLRGVNRDEKNIDMAKTYPNSRHFLTYRHSLRSYASILYLKRPDNFRIILRGEDVEHHSVLDDMMKIEEKTYKPMRSPEWPDQEEMVASLKLGFVKDAHHHIDIQGFNVYHKNRLIKPFWRVWNAAGSDGRGVIGILEANFIQPAHNKQGFERTVVLAKLESRLVTHQKNYWSSRCHEIGYAPRRKQKNYESSVTETPRPFNNINVVKGSSSSTPVPVRVFRPNVEPSGRNQIPQVETRERSFDINPEIGAKNRSYYGLGISSFKETGSVNLEAELQKVKQESAKLVSELQRQKQLLELQLQESKAKIQNLEKAQREKEVLELQLKESKARIQNLENRQEGVSTIFQQERARRDVTEDGLRKKLREASDVIDGLRKQVDTFKGKRIL.

Residues 1–11 are compositionally biased toward polar residues; the sequence is MAESGSTNPKS. The interval 1–47 is disordered; the sequence is MAESGSTNPKSPSVVPDSTLGGLKRDLRNYHDGDDSNNLSIKKSKTT. Positions 23 to 34 are enriched in basic and acidic residues; it reads LKRDLRNYHDGD. Residues 590 to 665 are a coiled coil; the sequence is SVNLEAELQK…LENRQEGVST (76 aa). Positions 672–679 match the Nuclear localization signal motif; that stretch reads ARRDVTED.

Belongs to the MORC ATPase protein family. As to quaternary structure, homodimer and heterodimer. Component of an RNA-directed DNA methylation (RdDM) complex. Mg(2+) is required as a cofactor. Mn(2+) serves as cofactor.

It is found in the nucleus. In terms of biological role, exhibits ATPase activity. Binds DNA/RNA in a non-specific manner and exhibits endonuclease activity. Probably involved in DNA repair. Involved in RNA-directed DNA methylation (RdDM) as a component of the RdDM machinery and required for gene silencing. May also be involved in the regulation of chromatin architecture to maintain gene silencing. The sequence is that of Protein MICRORCHIDIA 5 from Arabidopsis thaliana (Mouse-ear cress).